The sequence spans 512 residues: Lysine--tRNA ligase (512 aa).

E408 and E415 together coordinate Mg(2+).

This sequence belongs to the class-II aminoacyl-tRNA synthetase family. As to quaternary structure, homodimer. Mg(2+) serves as cofactor.

The protein resides in the cytoplasm. The enzyme catalyses tRNA(Lys) + L-lysine + ATP = L-lysyl-tRNA(Lys) + AMP + diphosphate. The protein is Lysine--tRNA ligase of Prochlorococcus marinus subsp. pastoris (strain CCMP1986 / NIES-2087 / MED4).